We begin with the raw amino-acid sequence, 610 residues long: DNA replication regulator sld2 (610 aa).

The span at 28–42 (WAQKNDGKKPSREAI) shows a compositional bias: basic and acidic residues. Disordered regions lie at residues 28 to 115 (WAQK…AVHE), 127 to 261 (SPAV…ERSV), and 338 to 610 (EQGG…RRRR). Polar residues-rich tracts occupy residues 86–110 (ETSLPSASTPSKRNRSAATPKSQHY) and 232–261 (TKTSTPLNKNTGNSPSKNNLTKTPSGERSV). 2 stretches are compositionally biased toward acidic residues: residues 373–386 (VPEEENSFEEDEAA) and 414–428 (FDDENFYDSQDEEDL). Positions 442–464 (VFKKKGQKRTTRKVNMRPTRTKR) are enriched in basic residues. The span at 470–480 (AEEEDDGEEEH) shows a compositional bias: acidic residues. A compositionally biased stretch (basic and acidic residues) spans 493–503 (KNLDGDDHHTL). A compositionally biased stretch (acidic residues) spans 514 to 527 (EFDDGSEGEDEEAE). Basic and acidic residues predominate over residues 544 to 573 (SAKEKTKKDATTETKKKKGTKEGGDEEPAK).

It belongs to the SLD2 family.

The protein resides in the cytoplasm. It is found in the nucleus. Its function is as follows. Has a role in the initiation of DNA replication. Required at S-phase checkpoint. This chain is DNA replication regulator sld2 (drc-4), found in Neurospora crassa (strain ATCC 24698 / 74-OR23-1A / CBS 708.71 / DSM 1257 / FGSC 987).